The chain runs to 178 residues: MAGSGRDDPLVVGRIVGDVLDPFVRITNLSVSYGARIVSNGCELKPSMVTQQPRVVVGGNDMRTFYTLVMVDPDAPSPSNPNLREYLHWLVTDIPGTTGATFGQEVMCYESPRPTMGIHRLVFVLFQQLGRQTVYAPGWRQNFSTRNFAELYNLGSPVATVYFNCQREAGSGGRRVYP.

This sequence belongs to the phosphatidylethanolamine-binding protein family. As to quaternary structure, interacts with FTIP1. Expressed in leaf vascular tissues. Specifically expressed in the phloem including companion cells.

The protein localises to the cytoplasm. The protein resides in the nucleus. Its subcellular location is the endoplasmic reticulum. In terms of biological role, probable mobile flower-promoting signal (florigen) that moves from the leaf to the shoot apical meristem (SAM) and induces flowering. Promotes the transition from vegetative growth to flowering under long day (LD) conditions. Acts upstream of MADS14 and MADS15. May also participate in the promotion of flowering under short day (SD) conditions. The sequence is that of Protein RICE FLOWERING LOCUS T 1 from Oryza sativa subsp. japonica (Rice).